The following is a 117-amino-acid chain: MTHAHITSWLITVILFFIAVSLQRSGASKAKIVQMALRLFYIFTVITGGLLLHSIASISILYIIKAIVGLWLIGAMEMVLSGMKKGKNTNVAWIQWIVAFVLVLFLGFMLPLGFDLF.

The next 4 membrane-spanning stretches (helical) occupy residues 2 to 22 (THAH…AVSL), 32 to 52 (IVQM…GLLL), 55 to 75 (IASI…LIGA), and 97 to 117 (IVAF…FDLF).

Belongs to the UPF0344 family.

It localises to the cell membrane. This chain is UPF0344 protein GWCH70_0687, found in Geobacillus sp. (strain WCH70).